A 110-amino-acid polypeptide reads, in one-letter code: U-scoloptoxin(16)-Er6a (110 aa).

Residues 1–26 (MTSTRKLSVSCLIVFMVSSLIAVSSG) form the signal peptide.

The protein belongs to the scoloptoxin-16 family. Contains 4 disulfide bonds. As to expression, expressed by the venom gland.

It localises to the secreted. The chain is U-scoloptoxin(16)-Er6a from Ethmostigmus rubripes (Giant centipede).